Consider the following 230-residue polypeptide: Isoprenyl transferase (230 aa).

Asp14 is a catalytic residue. Residue Asp14 coordinates Mg(2+). Substrate contacts are provided by residues 15 to 18, Trp19, Arg27, His31, and 59 to 61; these read GNGR and STE. Asn62 functions as the Proton acceptor in the catalytic mechanism. Residues Trp63, Arg65, Arg175, and 181 to 183 each bind substrate; that span reads RIS. Glu194 is a binding site for Mg(2+).

Belongs to the UPP synthase family. In terms of assembly, homodimer. Mg(2+) is required as a cofactor.

Functionally, catalyzes the condensation of isopentenyl diphosphate (IPP) with allylic pyrophosphates generating different type of terpenoids. This chain is Isoprenyl transferase, found in Fusobacterium nucleatum subsp. nucleatum (strain ATCC 25586 / DSM 15643 / BCRC 10681 / CIP 101130 / JCM 8532 / KCTC 2640 / LMG 13131 / VPI 4355).